The primary structure comprises 121 residues: Small ribosomal subunit protein uS13 (121 aa).

Positions 96 to 121 (PVRGQNTKNNARTRKGKAVAIAGKKK) are disordered. Residues 106-121 (ARTRKGKAVAIAGKKK) show a composition bias toward basic residues.

Belongs to the universal ribosomal protein uS13 family. As to quaternary structure, part of the 30S ribosomal subunit. Forms a loose heterodimer with protein S19. Forms two bridges to the 50S subunit in the 70S ribosome.

Functionally, located at the top of the head of the 30S subunit, it contacts several helices of the 16S rRNA. In the 70S ribosome it contacts the 23S rRNA (bridge B1a) and protein L5 of the 50S subunit (bridge B1b), connecting the 2 subunits; these bridges are implicated in subunit movement. Contacts the tRNAs in the A and P-sites. This chain is Small ribosomal subunit protein uS13, found in Streptococcus pneumoniae serotype 4 (strain ATCC BAA-334 / TIGR4).